A 208-amino-acid chain; its full sequence is Uridine kinase (208 aa).

Position 12-19 (12-19 (GGSGGGKT)) interacts with ATP.

Belongs to the uridine kinase family.

Its subcellular location is the cytoplasm. It catalyses the reaction uridine + ATP = UMP + ADP + H(+). The catalysed reaction is cytidine + ATP = CMP + ADP + H(+). The protein operates within pyrimidine metabolism; CTP biosynthesis via salvage pathway; CTP from cytidine: step 1/3. It participates in pyrimidine metabolism; UMP biosynthesis via salvage pathway; UMP from uridine: step 1/1. In Streptococcus pyogenes serotype M3 (strain ATCC BAA-595 / MGAS315), this protein is Uridine kinase.